We begin with the raw amino-acid sequence, 201 residues long: RILP-like protein 2 (201 aa).

The region spanning 14-108 (SPEMALDKDP…LRDGPQMGVG (95 aa)) is the RH1 domain. Residues 67–155 (LEMLEALVNQ…AQDELQCYKS (89 aa)) adopt a coiled-coil conformation. The RH2 domain occupies 121–197 (RPRFTLQELR…TVKSLFSFKQ (77 aa)). The interval 175–201 (TSSPRSNASKEKSTVKSLFSFKQGKNT) is disordered.

The protein belongs to the RILPL family.

Its subcellular location is the cytoplasm. It localises to the cytosol. The protein resides in the cytoskeleton. It is found in the microtubule organizing center. The protein localises to the centrosome. Its subcellular location is the cell projection. It localises to the cilium. Involved in cell shape and neuronal morphogenesis, positively regulating the establishment and maintenance of dendritic spines. Plays a role in cellular protein transport. In Xenopus laevis (African clawed frog), this protein is RILP-like protein 2 (rilpl2).